The chain runs to 1653 residues: MPRAPPSGPTTAPGREDDARGLRKRSRRPGLGEAGGCGPEAEGLEESRQKRRMVARASGREEVESDKSAKEKRKVTEASSDDPQPGIDLVRKESLTSSESFPTVECSEFQSMAFLQSLGKERLVEGIKRRIRIKKCKSLESPALKMTENKATQNSKVEFQDELYKNTLKYSCNSLSPGVENNSVLKLHDCSCLSHSKDCNDENNLAYKPDGGCMHVPENSSKSKKENPRSLIDKTDPSNIPQLLQTEENVMRVSQLLLEENDSYLSKNNGLFSCLQSEKTKHSIEESSIGRKSRKRMKVSEKGNGMVIEMKFSNMCNKSELMLQGNQTGADGKETEILEAKKSSLKVLRKVNNNTLSPMDPLLSLPETGKKTSPEHCANAVFQKALEQLSKEETKNVSQPLGCTSMDPPEDYFKSMKNSLVKSLSDCFPIEKRSSRESLKNEAEESKYSCQRTIPMTGKRTWPCYSCARISAQCWKKASLPQSSRQDDFLKHQMNQTHLTDSKLMLQSSVTETNSASSSIEKLDSNLNCLPSVSTVEPTSVVIKEPIVNDDEKMKSEELSRSASEVVSNTTEDTSLTNMTHNLTGSKKKDRGNLTKLNLTVASQDGQEANNSTSKTVHRKACITKQALVVPDLVKILNTGRLTNFKIPLLKNKTEKRKEINAKSSEREVYSPLELLDSVSGAEVRQSRTKENAVTVTSGPQSLSIQRSVIPVQASSDSFCSKNSCIIAPSFLKQGNNKQPSNHISASGRIISNNAAGSLTVENNTFSCDPGCIEKNPTFYSNEQEPFKAVSSEVSGRKMTENFSEIKVGFPDILKAYEDDVLLIDVIQDDPDLFGVSNEGELSFPSEVPMISQEPNVAEEHQSTDSKHMELPDKKEPSNALRELPVPDPGSMKSEICASLSAASEIKHDSKDANISLGEVTHETSSNEKPRGLSEQTKSSDLDEKCRFSDKVAIREEKETISEVCRRDSKNTEIMVGECHLAALVSKPLCLPVPLPPLNLNAHQEDTLLNPQMNDFRLPGKHSVLKLQNPEICEIFKREKNVGVFQKPLGLMIPHRYCKFHFNTLRGCERSQCKFGHVPEQGDEKVCMDVFKKYISINELCLLQRAANMFMEYYRKFLPGIHFDLQVLNDLLSSLLKHCLLKEVFQVMNLCIMIKMLPALKILLKIFEYVATMKLRNAVPALINIFCKLLEAGMVLDPEHFNYIVKLLYQVQASKQEITAVLEMKSRLHMRQFKKNWKCDLEAALNEIEHCKEKGDWTKLGNVYLNIKMSCEKFADFQRFCACIAETLTKDCKEERPGVPFCEFAETVSKDLQNSEVDKTLLGRIGISAMYFYHKLLQWSKGRKVLDKLYELKIHFTSLKGLIGPEKLAPRCQIVNIAAEIFLKSGSLDGAIWVLRESEWIINTPVWPCDRLDVLNRHNLLCTIAHEILAKSLYRQTFEVLQNLPGFQNSQETVEVSQYSLLFNKLLDACIESNSLGMSSSVAEFMISKSIPIDFSFLRRLITSLGRSCLWLKARAHYKSALSLGCYPPLEGNLYRKLLLIPSYLSEIEMLLAIEIFLVSNASSIQSPGTSTQMLQIVLKRSEENKSRSKDDYQAAVERLITAARISDPKLFIKHMTVNVNKEQVYSLEQCSALKWLKENMKWAGKVWLFNNH.

Disordered stretches follow at residues 1–88 (MPRA…PGID), 212–238 (GCMH…TDPS), 553–591 (KMKS…KKDR), 855–893 (PNVA…GSMK), and 919–942 (EVTH…SSDL). Basic and acidic residues-rich tracts occupy residues 58–69 (SGREEVESDKSA) and 221–236 (SKSK…DKTD). Residues 561 to 585 (RSASEVVSNTTEDTSLTNMTHNLTG) show a composition bias toward polar residues. 2 stretches are compositionally biased toward basic and acidic residues: residues 858–877 (AEEH…KKEP) and 920–942 (VTHE…SSDL).

The protein localises to the cytoplasm. The protein resides in the cytosol. In terms of biological role, important for normal spermatogenesis and male fertility. Specifically required for progression to the post-meiotic stages of spermatocyte development. Seems to be necessary for normal expression levels of a number of testis-expressed gene transcripts, although its role in this process is unclear. This Bos taurus (Bovine) protein is Protein TOPAZ1 (TOPAZ1).